The primary structure comprises 394 residues: Quinolinate synthase (394 aa).

Iminosuccinate is bound by residues His57 and Ser74. Cys121 lines the [4Fe-4S] cluster pocket. Residues 153-155 (YMN) and Ser174 each bind iminosuccinate. Cys243 contacts [4Fe-4S] cluster. Iminosuccinate contacts are provided by residues 269–271 (HPE) and Thr286. Cys333 is a binding site for [4Fe-4S] cluster.

This sequence belongs to the quinolinate synthase family. Type 3 subfamily. [4Fe-4S] cluster serves as cofactor.

Its subcellular location is the cytoplasm. It catalyses the reaction iminosuccinate + dihydroxyacetone phosphate = quinolinate + phosphate + 2 H2O + H(+). Its pathway is cofactor biosynthesis; NAD(+) biosynthesis; quinolinate from iminoaspartate: step 1/1. In terms of biological role, catalyzes the condensation of iminoaspartate with dihydroxyacetone phosphate to form quinolinate. The protein is Quinolinate synthase of Corynebacterium glutamicum (strain ATCC 13032 / DSM 20300 / JCM 1318 / BCRC 11384 / CCUG 27702 / LMG 3730 / NBRC 12168 / NCIMB 10025 / NRRL B-2784 / 534).